A 263-amino-acid polypeptide reads, in one-letter code: tRNA1(Val) (adenine(37)-N6)-methyltransferase (263 aa).

It belongs to the methyltransferase superfamily. tRNA (adenine-N(6)-)-methyltransferase family.

It localises to the cytoplasm. It carries out the reaction adenosine(37) in tRNA1(Val) + S-adenosyl-L-methionine = N(6)-methyladenosine(37) in tRNA1(Val) + S-adenosyl-L-homocysteine + H(+). Its function is as follows. Specifically methylates the adenine in position 37 of tRNA(1)(Val) (anticodon cmo5UAC). This is tRNA1(Val) (adenine(37)-N6)-methyltransferase from Pseudoalteromonas atlantica (strain T6c / ATCC BAA-1087).